A 227-amino-acid polypeptide reads, in one-letter code: Putative molybdenum transport system permease protein YvgM (227 aa).

Helical transmembrane passes span 17-37, 57-77, 94-114, 142-162, and 201-221; these read VVLS…LGTL, FMLP…VIFG, VIFT…PLMY, VFIH…SILS, and TLAW…LFFI. In terms of domain architecture, ABC transmembrane type-1 spans 17 to 221; it reads VVLSFQVAAV…VISFLMLFFI (205 aa).

The protein belongs to the binding-protein-dependent transport system permease family. CysTW subfamily.

The protein localises to the cell membrane. In terms of biological role, could be part of the binding-protein-dependent transport system for molybdenum; probably responsible for the translocation of the substrate across the membrane. The sequence is that of Putative molybdenum transport system permease protein YvgM (yvgM) from Bacillus subtilis (strain 168).